A 54-amino-acid polypeptide reads, in one-letter code: Preprotein translocase subunit SecG (54 aa).

Topologically, residues 1–31 (MSSGQNSGGLMSSAGLVRYFDAEDRNSIRID) are cytoplasmic. A helical membrane pass occupies residues 32 to 53 (PKTIVAFGVLFGVGVLVLNALA). Isoleucine 54 is a topological domain (extracellular).

This sequence belongs to the SEC61-beta family. In terms of assembly, component of the protein translocase complex. Heterotrimer consisting of alpha (SecY), beta (SecG) and gamma (SecE) subunits. Can form oligomers of the heterotrimer.

Its subcellular location is the cell membrane. Involved in protein export. The function of the beta subunit is unknown, but it may be involved in stabilization of the trimeric complex. The polypeptide is Preprotein translocase subunit SecG (Haloquadratum walsbyi (strain DSM 16790 / HBSQ001)).